The following is a 1523-amino-acid chain: Slit homolog 3 protein (1523 aa).

The first 33 residues, Met1–Ala33, serve as a signal peptide directing secretion. An LRRNT domain is found at Cys34–Arg61. LRR repeat units follow at residues Asn62–Gly83, Asn86–Asp107, Gln110–Ser131, Lys134–Gly155, Gly158–Ala179, and Asp182–His203. The N-linked (GlcNAc...) asparagine glycan is linked to Asn72. N-linked (GlcNAc...) asparagine glycosylation is present at Asn192. Positions Asn215–Gly265 constitute an LRRCT 1 domain. The LRRNT 2 domain maps to Pro271–Glu307. Cys284 and Cys293 form a disulfide bridge. LRR repeat units lie at residues Gly308–Gln329, Lys332–Gly353, Ser356–Gly377, Ser380–Asp401, and Asn404–Pro425. Residues Asn437–Gly487 enclose the LRRCT 2 domain. 4 disulfides stabilise this stretch: Cys441–Cys464, Cys443–Cys485, Cys505–Cys511, and Cys509–Cys518. In terms of domain architecture, LRRNT 3 spans Ser496–Glu532. 5 LRR repeats span residues Tyr533–Lys554, Asn558–Gly579, Gly582–Gly603, Gly606–Gly627, and Ser630–Thr651. N-linked (GlcNAc...) asparagine glycosylation occurs at Asn563. N-linked (GlcNAc...) asparagine glycosylation is present at Asn622. The LRRCT 3 domain maps to Asn663 to Gly713. Intrachain disulfides connect Cys667/Cys690 and Cys669/Cys711. The region spanning Glu716 to Lys752 is the LRRNT 4 domain. LRR repeat units follow at residues Asp753–Phe774, Gln776–Asn797, His800–Gly821, and Ser824–Asp845. N-linked (GlcNAc...) asparagine glycans are attached at residues Asn784, Asn792, and Asn797. The 51-residue stretch at Asn857–Gly907 folds into the LRRCT 4 domain. 6 consecutive EGF-like domains span residues Asn918–Thr953, Pro955–Glu994, Asn996–Asp1032, Val1034–Glu1072, Asp1074–Glu1110, and Gln1119–Glu1155. Disulfide bonds link Cys920/Cys931, Cys925/Cys941, Cys943/Cys952, Cys959/Cys970, Cys964/Cys982, Cys984/Cys993, Cys1000/Cys1011, Cys1005/Cys1020, Cys1022/Cys1031, Cys1038/Cys1051, Cys1045/Cys1060, Cys1062/Cys1071, Cys1078/Cys1089, Cys1083/Cys1098, Cys1100/Cys1109, Cys1123/Cys1134, Cys1128/Cys1143, and Cys1145/Cys1154. The N-linked (GlcNAc...) asparagine glycan is linked to Asn928. N-linked (GlcNAc...) asparagine glycosylation is present at Asn1025. The Laminin G-like domain maps to Ile1158–Cys1332. Residues Asn1181 and Asn1247 are each glycosylated (N-linked (GlcNAc...) asparagine). Cystine bridges form between Cys1305-Cys1332, Cys1355-Cys1364, Cys1372-Cys1382, Cys1377-Cys1391, and Cys1393-Cys1402. 2 consecutive EGF-like domains span residues His1340–Asp1365 and Ala1368–Asp1403. The N-linked (GlcNAc...) asparagine glycan is linked to Asn1406. The EGF-like 9 domain maps to Ser1408–Glu1444. 7 disulfides stabilise this stretch: Cys1412/Cys1422, Cys1417/Cys1432, Cys1434/Cys1443, Cys1449/Cys1487, Cys1467/Cys1501, Cys1478/Cys1517, and Cys1482/Cys1519. In terms of domain architecture, CTCK spans Cys1449 to Ser1523.

It is found in the secreted. Its function is as follows. May act as molecular guidance cue in cellular migration, and function may be mediated by interaction with roundabout homolog receptors. The sequence is that of Slit homolog 3 protein (Slit3) from Rattus norvegicus (Rat).